The chain runs to 797 residues: Striatin-3 (797 aa).

M1 carries the post-translational modification N-acetylmethionine. 2 stretches are compositionally biased toward gly residues: residues 1 to 13 and 23 to 43; these read MDEL…GGPG and GPGG…GGGP. The interval 1–60 is disordered; that stretch reads MDELAGGGGGGPGMAAPPRQQQGPGGNLGLSPGGNGAAGGGGPPASEGAGPAAGPELSRP. Low complexity predominate over residues 44–56; sequence PASEGAGPAAGPE. The tract at residues 71 to 79 is caveolin-binding; the sequence is YIQHEWARF. The stretch at 77–136 forms a coiled coil; it reads ARFEMERAHWEVERAELQARIAFLQGERKGQENLKKDLVRRIKMLEYALKQERAKYHKLK. Position 150 is a phosphothreonine (T150). The interval 166–183 is calmodulin-binding; that stretch reads QNSQLTWKQGRQLLRQYL. Residues S202, S214, and S229 each carry the phosphoserine modification. 2 disordered regions span residues 224–278 and 313–338; these read LNGG…KHRM and DGEG…SPTA. The segment covering 230–241 has biased composition (basic and acidic residues); sequence PKQKGQEIKRSS. The segment covering 253 to 265 has biased composition (acidic residues); sequence NADDSDEDEENDM. Phosphoserine occurs at positions 257 and 335. WD repeat units lie at residues 478-517, 531-570, 584-623, 679-718, 721-760, and 767-797; these read SHFD…PAKK, AHIG…VDPY, GHTD…PCIC, QSNN…MIHS, AHLD…CVQE, and KLDE…KVFV.

It belongs to the WD repeat striatin family. Tetramerizes. Part of the core of STRIPAK complexes composed of PP2A catalytic and scaffolding subunits, the striatins (PP2A regulatory subunits), the striatin-associated proteins MOB4, STRIP1 and STRIP2, PDCD10 and members of the STE20 kinases, such as STK24 and STK26. The STRIPAK complex can be extended by adapter proteins such as SLMAP:SIKE1 or CTTNBP2NL. Interacts with CDC42BPB.

Its subcellular location is the cytoplasm. The protein resides in the membrane. In terms of biological role, calmodulin-binding scaffolding protein which is the center of the striatin-interacting phosphatase and kinase (STRIPAK) complexes. STRIPAK complexes have critical roles in protein (de)phosphorylation and are regulators of multiple signaling pathways including Hippo, MAPK, nuclear receptor and cytoskeleton remodeling. Different types of STRIPAK complexes are involved in a variety of biological processes such as cell growth, differentiation, apoptosis, metabolism and immune regulation. The polypeptide is Striatin-3 (Homo sapiens (Human)).